The primary structure comprises 60 residues: Ferredoxin (60 aa).

2 consecutive 4Fe-4S ferredoxin-type domains span residues 2–29 and 30–60; these read KVRV…LGDD and GKAK…SVEE. [4Fe-4S] cluster is bound by residues C10, C13, and C16. A disulfide bond links C20 and C43. C51 provides a ligand contact to [4Fe-4S] cluster.

As to quaternary structure, monomer. The cofactor is [4Fe-4S] cluster.

Its function is as follows. Ferredoxins are iron-sulfur proteins that transfer electrons in a wide variety of metabolic reactions. In Thermotoga maritima (strain ATCC 43589 / DSM 3109 / JCM 10099 / NBRC 100826 / MSB8), this protein is Ferredoxin (fdx).